The chain runs to 307 residues: Homoserine kinase (307 aa).

91 to 101 contributes to the ATP binding site; the sequence is PLARGLGSSAA.

This sequence belongs to the GHMP kinase family. Homoserine kinase subfamily.

It localises to the cytoplasm. The enzyme catalyses L-homoserine + ATP = O-phospho-L-homoserine + ADP + H(+). Its pathway is amino-acid biosynthesis; L-threonine biosynthesis; L-threonine from L-aspartate: step 4/5. Catalyzes the ATP-dependent phosphorylation of L-homoserine to L-homoserine phosphate. The protein is Homoserine kinase of Deinococcus radiodurans (strain ATCC 13939 / DSM 20539 / JCM 16871 / CCUG 27074 / LMG 4051 / NBRC 15346 / NCIMB 9279 / VKM B-1422 / R1).